Consider the following 113-residue polypeptide: U11-theraphotoxin-Hhn1a (113 aa).

A signal peptide spans 1-21; it reads MNTVRVTFLLVFVLAVSLGRA. Positions 22 to 74 are excised as a propeptide; the sequence is DKDENRMEMQEKTEQGKSYLDFAENLLLQKLEELEAKLLEEDSEESRNSRQKR. Disulfide bonds link Cys-75–Cys-90, Cys-82–Cys-95, and Cys-89–Cys-110.

The protein belongs to the neurotoxin 14 (magi-1) family. 01 (HNTX-16) subfamily. Expressed by the venom gland.

The protein localises to the secreted. In terms of biological role, probable ion channel inhibitor. The polypeptide is U11-theraphotoxin-Hhn1a (Cyriopagopus hainanus (Chinese bird spider)).